The chain runs to 231 residues: NADH-ubiquinone oxidoreductase chain 4 (231 aa).

6 consecutive transmembrane segments (helical) span residues 1–21, 34–54, 63–85, 89–111, 118–138, and 156–176; these read PIAG…YGII, MFLP…LTCL, IAYS…TPWG, GMTL…NTTY, ILIL…WWLL, and LLIM…LGLS.

The protein belongs to the complex I subunit 4 family.

The protein resides in the mitochondrion membrane. The enzyme catalyses a ubiquinone + NADH + 5 H(+)(in) = a ubiquinol + NAD(+) + 4 H(+)(out). Functionally, core subunit of the mitochondrial membrane respiratory chain NADH dehydrogenase (Complex I) that is believed to belong to the minimal assembly required for catalysis. Complex I functions in the transfer of electrons from NADH to the respiratory chain. The immediate electron acceptor for the enzyme is believed to be ubiquinone. The protein is NADH-ubiquinone oxidoreductase chain 4 (MT-ND4) of Calloselasma rhodostoma (Malayan pit viper).